The sequence spans 230 residues: Large ribosomal subunit protein uL1 (230 aa).

The protein belongs to the universal ribosomal protein uL1 family. As to quaternary structure, part of the 50S ribosomal subunit.

Its function is as follows. Binds directly to 23S rRNA. The L1 stalk is quite mobile in the ribosome, and is involved in E site tRNA release. In terms of biological role, protein L1 is also a translational repressor protein, it controls the translation of the L11 operon by binding to its mRNA. This is Large ribosomal subunit protein uL1 from Bifidobacterium longum (strain DJO10A).